The sequence spans 155 residues: Protein SprT-like (155 aa).

The SprT-like domain occupies 7–145 (QRHMEEVSLQ…GSCGGKLIQT (139 aa)). Residue His-67 participates in Zn(2+) binding. Glu-68 is an active-site residue. His-71 contributes to the Zn(2+) binding site.

It belongs to the SprT family. Requires Zn(2+) as cofactor.

The protein resides in the cytoplasm. This Listeria monocytogenes serotype 4b (strain CLIP80459) protein is Protein SprT-like.